The chain runs to 430 residues: Bifunctional protein GlmU (430 aa).

Residues 1–223 (MSISVVILAA…EEEFKGVNSK (223 aa)) are pyrophosphorylase. UDP-N-acetyl-alpha-D-glucosamine-binding positions include 8–11 (LAAG), lysine 22, and 81–82 (GT). Aspartate 102 is a binding site for Mg(2+). Residues glycine 135, glutamate 149, asparagine 164, and asparagine 221 each contribute to the UDP-N-acetyl-alpha-D-glucosamine site. Asparagine 221 is a binding site for Mg(2+). Residues 224–244 (LDLARAEEIMQRRIKEALMMA) are linker. Positions 245–430 (GVTMCLPETI…NFFYKFFGDK (186 aa)) are N-acetyltransferase. Positions 308 and 325 each coordinate UDP-N-acetyl-alpha-D-glucosamine. The Proton acceptor role is filled by histidine 336. Residues tyrosine 339 and asparagine 350 each coordinate UDP-N-acetyl-alpha-D-glucosamine. Residues alanine 353, 359-360 (NY), serine 378, alanine 396, and arginine 413 each bind acetyl-CoA.

This sequence in the N-terminal section; belongs to the N-acetylglucosamine-1-phosphate uridyltransferase family. The protein in the C-terminal section; belongs to the transferase hexapeptide repeat family. In terms of assembly, homotrimer. Mg(2+) is required as a cofactor.

It localises to the cytoplasm. The catalysed reaction is alpha-D-glucosamine 1-phosphate + acetyl-CoA = N-acetyl-alpha-D-glucosamine 1-phosphate + CoA + H(+). It catalyses the reaction N-acetyl-alpha-D-glucosamine 1-phosphate + UTP + H(+) = UDP-N-acetyl-alpha-D-glucosamine + diphosphate. The protein operates within nucleotide-sugar biosynthesis; UDP-N-acetyl-alpha-D-glucosamine biosynthesis; N-acetyl-alpha-D-glucosamine 1-phosphate from alpha-D-glucosamine 6-phosphate (route II): step 2/2. It functions in the pathway nucleotide-sugar biosynthesis; UDP-N-acetyl-alpha-D-glucosamine biosynthesis; UDP-N-acetyl-alpha-D-glucosamine from N-acetyl-alpha-D-glucosamine 1-phosphate: step 1/1. Its pathway is bacterial outer membrane biogenesis; LPS lipid A biosynthesis. In terms of biological role, catalyzes the last two sequential reactions in the de novo biosynthetic pathway for UDP-N-acetylglucosamine (UDP-GlcNAc). The C-terminal domain catalyzes the transfer of acetyl group from acetyl coenzyme A to glucosamine-1-phosphate (GlcN-1-P) to produce N-acetylglucosamine-1-phosphate (GlcNAc-1-P), which is converted into UDP-GlcNAc by the transfer of uridine 5-monophosphate (from uridine 5-triphosphate), a reaction catalyzed by the N-terminal domain. This chain is Bifunctional protein GlmU, found in Sulfurovum sp. (strain NBC37-1).